The primary structure comprises 896 residues: Protein translocase subunit SecA (896 aa).

ATP contacts are provided by residues Gln-87, Gly-105–Thr-109, and Asp-507. Positions Glu-853–Pro-879 are disordered. Residues Thr-866–Arg-876 are compositionally biased toward basic and acidic residues. Cys-880, Cys-882, Cys-891, and His-892 together coordinate Zn(2+).

Belongs to the SecA family. Monomer and homodimer. Part of the essential Sec protein translocation apparatus which comprises SecA, SecYEG and auxiliary proteins SecDF-YajC and YidC. The cofactor is Zn(2+).

It localises to the cell inner membrane. Its subcellular location is the cytoplasm. The enzyme catalyses ATP + H2O + cellular proteinSide 1 = ADP + phosphate + cellular proteinSide 2.. In terms of biological role, part of the Sec protein translocase complex. Interacts with the SecYEG preprotein conducting channel. Has a central role in coupling the hydrolysis of ATP to the transfer of proteins into and across the cell membrane, serving both as a receptor for the preprotein-SecB complex and as an ATP-driven molecular motor driving the stepwise translocation of polypeptide chains across the membrane. This is Protein translocase subunit SecA from Legionella pneumophila (strain Corby).